The following is a 159-amino-acid chain: MNISIISIGKLKEKYLKQGIAEYLKRLSAYAKVEVIELPDEKAPENLSEAEMLIVKEKEGIRILDKISDDTHVIALAIEGKQKSSEEFAVSLDRLATYGKSKVAFVIGGSLGLSSEVIKRSNESLSFSKMTLPHQLMRLVLLEQVYRAFRINRGEPYHK.

S-adenosyl-L-methionine contacts are provided by residues leucine 76, glycine 108, and 127–132; that span reads FSKMTL.

The protein belongs to the RNA methyltransferase RlmH family. As to quaternary structure, homodimer.

The protein localises to the cytoplasm. The catalysed reaction is pseudouridine(1915) in 23S rRNA + S-adenosyl-L-methionine = N(3)-methylpseudouridine(1915) in 23S rRNA + S-adenosyl-L-homocysteine + H(+). Functionally, specifically methylates the pseudouridine at position 1915 (m3Psi1915) in 23S rRNA. The polypeptide is Ribosomal RNA large subunit methyltransferase H (Bacillus cereus (strain ATCC 10987 / NRS 248)).